A 592-amino-acid polypeptide reads, in one-letter code: Cyclin-dependent kinase-like 3 (592 aa).

One can recognise a Protein kinase domain in the interval 4 to 286; the sequence is YETLGKVGEG…SSDLLHHEYF (283 aa). ATP is bound by residues 10–18 and lysine 33; that span reads VGEGSYGTV. The [NKR]KIAxRE motif lies at 44-50; the sequence is NKIAMRE. Residue aspartate 125 is the Proton acceptor of the active site. The residue at position 158 (threonine 158) is a Phosphothreonine. Tyrosine 160 carries the post-translational modification Phosphotyrosine. Basic and acidic residues predominate over residues 368-379; sequence GDISEPKKKEYE. Disordered regions lie at residues 368–390 and 459–485; these read GDIS…ANEN and RAKK…PGPI. Residues 466-477 are compositionally biased toward polar residues; the sequence is SSQSIGQVMPNS.

It belongs to the protein kinase superfamily. CMGC Ser/Thr protein kinase family. CDC2/CDKX subfamily.

Its subcellular location is the cytoplasm. It carries out the reaction L-seryl-[protein] + ATP = O-phospho-L-seryl-[protein] + ADP + H(+). The enzyme catalyses L-threonyl-[protein] + ATP = O-phospho-L-threonyl-[protein] + ADP + H(+). The protein is Cyclin-dependent kinase-like 3 of Homo sapiens (Human).